The following is a 174-amino-acid chain: Solute carrier family 2, facilitated glucose transporter member 4 (174 aa).

Topologically, residues 1–19 are cytoplasmic; that stretch reads QQIGSEDGEPPQQRVTGTL. The tract at residues 2 to 8 is interaction with SRFBP1; that stretch reads QIGSEDG. A Phosphoserine modification is found at serine 5. Residues 20 to 40 traverse the membrane as a helical segment; sequence VLAVFSAVLGSLQFGYNIGVI. Over 41-76 the chain is Extracellular; the sequence is NAPQKVIEQSYNETWLGRQGPNGPGSIPPGTLTTLW. A glycan (N-linked (GlcNAc...) asparagine) is linked at asparagine 52. The helical transmembrane segment at 77–97 threads the bilayer; it reads ALSVAIFSVGGMFSSFLLGII. Over 98 to 114 the chain is Cytoplasmic; sequence SQWLGRKKAMLFNNTLA. Residues 115 to 135 form a helical membrane-spanning segment; sequence VLAGALMGLAKAAASYEMLIL. The Extracellular portion of the chain corresponds to 136-137; it reads GR. Residues 138-158 traverse the membrane as a helical segment; sequence FLIGAYSGLASGLVPMYVGEI. Residues 159 to 166 are Cytoplasmic-facing; that stretch reads APTHLRGA. Residues 167 to 174 traverse the membrane as a helical segment; it reads LGTLNQLA.

This sequence belongs to the major facilitator superfamily. Sugar transporter (TC 2.A.1.1) family. Glucose transporter subfamily. In terms of assembly, binds to DAXX. Interacts via its N-terminus with SRFBP1. Interacts with NDUFA9. Interacts with TRARG1; the interaction is required for proper SLC2A4 recycling after insulin stimulation. Sumoylated. In terms of processing, palmitoylated. Palmitoylation by ZDHHC7 controls the insulin-dependent translocation of GLUT4 to the plasma membrane.

It localises to the cell membrane. It is found in the endomembrane system. Its subcellular location is the cytoplasm. The protein localises to the perinuclear region. It catalyses the reaction D-glucose(out) = D-glucose(in). Insulin-regulated facilitative glucose transporter, which plays a key role in removal of glucose from circulation. Response to insulin is regulated by its intracellular localization: in the absence of insulin, it is efficiently retained intracellularly within storage compartments in muscle and fat cells. Upon insulin stimulation, translocates from these compartments to the cell surface where it transports glucose from the extracellular milieu into the cell. The polypeptide is Solute carrier family 2, facilitated glucose transporter member 4 (Sus scrofa (Pig)).